The chain runs to 247 residues: Segregation and condensation protein A (247 aa).

Belongs to the ScpA family. Component of a cohesin-like complex composed of ScpA, ScpB and the Smc homodimer, in which ScpA and ScpB bind to the head domain of Smc. The presence of the three proteins is required for the association of the complex with DNA.

The protein localises to the cytoplasm. Functionally, participates in chromosomal partition during cell division. May act via the formation of a condensin-like complex containing Smc and ScpB that pull DNA away from mid-cell into both cell halves. The polypeptide is Segregation and condensation protein A (Bacillus anthracis (strain A0248)).